A 159-amino-acid polypeptide reads, in one-letter code: Eukaryotic translation initiation factor 5A (159 aa).

A compositionally biased stretch (basic and acidic residues) spans 1-12; sequence MSDEEHQFESKA. Residues 1–23 form a disordered region; it reads MSDEEHQFESKADAGASKTYPQQ. Position 52 is a hypusine (Lys52).

It belongs to the eIF-5A family. In terms of processing, lys-52 undergoes hypusination, a unique post-translational modification that consists in the addition of a butylamino group from spermidine to lysine side chain, leading to the formation of the unusual amino acid hypusine. eIF-5As are the only known proteins to undergo this modification, which is essential for their function.

Translation factor that promotes translation elongation and termination, particularly upon ribosome stalling at specific amino acid sequence contexts. Binds between the exit (E) and peptidyl (P) site of the ribosome and promotes rescue of stalled ribosome: specifically required for efficient translation of polyproline-containing peptides as well as other motifs that stall the ribosome. Acts as a ribosome quality control (RQC) cofactor by joining the RQC complex to facilitate peptidyl transfer during CAT tailing step. The chain is Eukaryotic translation initiation factor 5A (EIFSV1) from Senecio vernalis (Spring groundsel).